Reading from the N-terminus, the 241-residue chain is Probable transcriptional regulatory protein FMG_0893 (241 aa).

The protein belongs to the TACO1 family.

The protein localises to the cytoplasm. The protein is Probable transcriptional regulatory protein FMG_0893 of Finegoldia magna (strain ATCC 29328 / DSM 20472 / WAL 2508) (Peptostreptococcus magnus).